The sequence spans 537 residues: Probable protein kinase UbiB (537 aa).

A helical membrane pass occupies residues Leu30–Leu47. One can recognise a Protein kinase domain in the interval Arg126 to Leu490. Residues Leu132 to Val140 and Lys154 each bind ATP. Asp289 functions as the Proton acceptor in the catalytic mechanism. Helical transmembrane passes span Leu489 to Gln507 and Ala513 to Val530.

It belongs to the ABC1 family. UbiB subfamily.

The protein resides in the cell inner membrane. It participates in cofactor biosynthesis; ubiquinone biosynthesis [regulation]. Its function is as follows. Is probably a protein kinase regulator of UbiI activity which is involved in aerobic coenzyme Q (ubiquinone) biosynthesis. In Azotobacter vinelandii (strain DJ / ATCC BAA-1303), this protein is Probable protein kinase UbiB.